The primary structure comprises 153 residues: SsrA-binding protein (153 aa).

The protein belongs to the SmpB family.

Its subcellular location is the cytoplasm. Required for rescue of stalled ribosomes mediated by trans-translation. Binds to transfer-messenger RNA (tmRNA), required for stable association of tmRNA with ribosomes. tmRNA and SmpB together mimic tRNA shape, replacing the anticodon stem-loop with SmpB. tmRNA is encoded by the ssrA gene; the 2 termini fold to resemble tRNA(Ala) and it encodes a 'tag peptide', a short internal open reading frame. During trans-translation Ala-aminoacylated tmRNA acts like a tRNA, entering the A-site of stalled ribosomes, displacing the stalled mRNA. The ribosome then switches to translate the ORF on the tmRNA; the nascent peptide is terminated with the 'tag peptide' encoded by the tmRNA and targeted for degradation. The ribosome is freed to recommence translation, which seems to be the essential function of trans-translation. This chain is SsrA-binding protein, found in Paramagnetospirillum magneticum (strain ATCC 700264 / AMB-1) (Magnetospirillum magneticum).